Reading from the N-terminus, the 548-residue chain is Chaperonin GroEL 2 (548 aa).

ATP-binding positions include 30–33, lysine 51, 87–91, glycine 415, and aspartate 496; these read TLGP and DGTTT. The segment at 529–548 is disordered; that stretch reads KDAMPSPDMGGMGGMGGMGF. The span at 538–548 shows a compositional bias: gly residues; that stretch reads GGMGGMGGMGF.

This sequence belongs to the chaperonin (HSP60) family. Forms a cylinder of 14 subunits composed of two heptameric rings stacked back-to-back. Interacts with the co-chaperonin GroES.

The protein localises to the cytoplasm. The catalysed reaction is ATP + H2O + a folded polypeptide = ADP + phosphate + an unfolded polypeptide.. Together with its co-chaperonin GroES, plays an essential role in assisting protein folding. The GroEL-GroES system forms a nano-cage that allows encapsulation of the non-native substrate proteins and provides a physical environment optimized to promote and accelerate protein folding. This Rhodospirillum rubrum (strain ATCC 11170 / ATH 1.1.1 / DSM 467 / LMG 4362 / NCIMB 8255 / S1) protein is Chaperonin GroEL 2.